The sequence spans 23 residues: HLLQFNKMIKFETGKNAIPFYAF.

The cofactor is Ca(2+). Contains 7 disulfide bonds. In terms of tissue distribution, expressed by the venom gland.

The protein resides in the secreted. The catalysed reaction is a 1,2-diacyl-sn-glycero-3-phosphocholine + H2O = a 1-acyl-sn-glycero-3-phosphocholine + a fatty acid + H(+). Snake venom phospholipase A2 (PLA2) that shows presynaptic neurotoxicity. PLA2 catalyzes the calcium-dependent hydrolysis of the 2-acyl groups in 3-sn-phosphoglycerides. This is Phospholipase A2 crotoxin basic chain 3 from Crotalus durissus terrificus (South American rattlesnake).